The primary structure comprises 58 residues: Large ribosomal subunit protein uL30 (58 aa).

The protein belongs to the universal ribosomal protein uL30 family. In terms of assembly, part of the 50S ribosomal subunit.

The protein is Large ribosomal subunit protein uL30 of Pseudomonas aeruginosa (strain LESB58).